We begin with the raw amino-acid sequence, 242 residues long: MKTVTIITIIVVIIVVILIIMVLSKSCVSHFRNVGSLNSRDVNLKDDFSYANIDDPYNKPFVLNNLINPTKCQEIMQFANGKLFDSQVLSGTDKNIRNSQQMWISKNNPMVKPIFENICRQFNVPFDNAEDLQVVRYLPNQYYNEHHDSCCDSSKQCSEFIERGGQRILTVLIYLNNEFSDGHTYFPNLNQKFKPKTGDALVFYPLANNSNKCHPYSLHAGMPVTSGEKWIANLWFRERKFS.

In terms of domain architecture, Fe2OG dioxygenase spans 128 to 238; that stretch reads NAEDLQVVRY…KWIANLWFRE (111 aa).

The protein belongs to the P4HA family. It depends on Fe cation as a cofactor. Requires L-ascorbate as cofactor.

Its subcellular location is the virion. The enzyme catalyses L-prolyl-[collagen] + 2-oxoglutarate + O2 = trans-4-hydroxy-L-prolyl-[collagen] + succinate + CO2. Functionally, may catalyze the post-translational formation of 4-hydroxyproline in -Xaa-Pro-Gly- sequences in the 6 collagen-like proteins of Mimivirus. This Acanthamoeba polyphaga mimivirus (APMV) protein is Putative prolyl 4-hydroxylase.